The chain runs to 576 residues: Arginine--tRNA ligase (576 aa).

Positions 122-132 (PNVAKEMHVGH) match the 'HIGH' region motif.

This sequence belongs to the class-I aminoacyl-tRNA synthetase family. Monomer.

The protein resides in the cytoplasm. It catalyses the reaction tRNA(Arg) + L-arginine + ATP = L-arginyl-tRNA(Arg) + AMP + diphosphate. This Thermobifida fusca (strain YX) protein is Arginine--tRNA ligase.